The chain runs to 154 residues: Superoxide dismutase [Cu-Zn] (154 aa).

Cu cation is bound by residues His47, His49, and His64. Cys58 and Cys147 are disulfide-bonded. His64, His72, His81, and Asp84 together coordinate Zn(2+). His121 provides a ligand contact to Cu cation. Arg144 provides a ligand contact to substrate.

Belongs to the Cu-Zn superoxide dismutase family. In terms of assembly, homodimer. Cu cation is required as a cofactor. Requires Zn(2+) as cofactor.

It localises to the cytoplasm. The catalysed reaction is 2 superoxide + 2 H(+) = H2O2 + O2. Its function is as follows. Destroys radicals which are normally produced within the cells and which are toxic to biological systems. This chain is Superoxide dismutase [Cu-Zn] (SOD1), found in Candida albicans (Yeast).